The chain runs to 63 residues: Large ribosomal subunit protein uL29 (63 aa).

The protein belongs to the universal ribosomal protein uL29 family.

In Aggregatibacter actinomycetemcomitans (Actinobacillus actinomycetemcomitans), this protein is Large ribosomal subunit protein uL29 (rpmC).